Reading from the N-terminus, the 1159-residue chain is VLRYRGIVCDRCGVEVTEKKVRRERMGHIALEVPVAHIWFFRSIPNKIAYLLGIPSKKLDAIIYYERYAVIQPGTVEGLAAGDLLTEEEYLDILDSLPEGNQDLEDDAPEKFIAKIGAEAIYDLLCRVDLDKLSYELRAKASKDSSQQRKKEALKRLQVVESFRASEGYSRPEWMVMKVIPVIPPELHTLVPLDGGRFATSDLNELCRRVIIRNNRLRRLIEQRAPQVILRNEKRMLQEAVDSFFDNSSKAGAVKSDSNRPLKSLTDSLKGKQGRFRQNLLGKRVDYSGRSVIVVGPEPKMHECGLPKYMAAELYKPFVIRKLLERGIVKTVKSARRIVDKKGPEVWDILEHVIKGHPVLLNRAPTLHRLGIQAFQPKLIEGKAIQLHPLACTAFNADFDGDQMAVHLPLSNEAILEAQMLMLASHNILNPANGAPITVPSQDMVLGLYYITKLRKDAKGAGLVFYGREEATIAYNDGKVAIHAPIKVMVDDVDADGNPIRHLVETSVGRLMFNECVPQGVGYINSILGKKALRDIIGHVIKECGIAKTAKFLDDIKDLGYQMAFKGGLSFNLSDVLIPKEKDTLIQEGFAEVDEIMSNYNMGFITNNERYNQIIDTWTHVNTCLSGILMKQLSEDNEGFNSIFMMMDSGARGSKDQINQLSGIRGLMAKPQKSGTEGRTLLENPILSNFKEGLSVLEYFISTHGARKGLSDTALKTAECGYLTRRLVDVSQDVIVTEEDCGTLRGLVTEEIKEGDVVIASLYERILGRVSVHDVIHPNTGEVIVKAGEEINEKAATIIQDSPITNVEIRSVLTCESKKGVCAKCYGRNLSQGHMVHIGEVVGVVAAQSIGEPGTQLTLRTFHTGGIASNIGSEKYVKAKYDGILEIDELRTVDAKDEEGNAYQVVVGRLAEMRVIDENTRMTLITHHIPYGSKLYFKPGDKVKKDDNIFESDPFNAVIIAEETGKLKFEDVVENVTYKVEYDSNVSAGHKEHIIIESKDKNLSPSVSILNSKGDILRTYNLPVGAHFVKSNGDSVKTGDVLVKIPRSTLKGGDITGGLPRVTELFEARNPTNPAIVAEIDGEVSLGRVRRGNREVTITSKLGEERKYLIPLSKQLLIQENDYVRAGMPLSDGAITPADILAIKGPNAVQDYIVNGVQD.

Mg(2+)-binding residues include D398, D400, and D402. The Zn(2+) site is built by C741, C815, C822, and C825.

This sequence belongs to the RNA polymerase beta' chain family. In terms of assembly, the RNAP catalytic core consists of 2 alpha, 1 beta, 1 beta' and 1 omega subunit. When a sigma factor is associated with the core the holoenzyme is formed, which can initiate transcription. The cofactor is Mg(2+). Zn(2+) is required as a cofactor.

The enzyme catalyses RNA(n) + a ribonucleoside 5'-triphosphate = RNA(n+1) + diphosphate. In terms of biological role, DNA-dependent RNA polymerase catalyzes the transcription of DNA into RNA using the four ribonucleoside triphosphates as substrates. In Porphyromonas cangingivalis, this protein is DNA-directed RNA polymerase subunit beta'.